Reading from the N-terminus, the 177-residue chain is Large ribosomal subunit protein eL20 (177 aa).

Belongs to the eukaryotic ribosomal protein eL20 family.

In Drosophila melanogaster (Fruit fly), this protein is Large ribosomal subunit protein eL20 (RpL18A).